A 1228-amino-acid chain; its full sequence is Multimerin-1 (1228 aa).

Positions 1 to 19 (MKGARLFVLLSSLWSGGIG) are cleaved as a signal peptide. An N-linked (GlcNAc...) asparagine glycan is attached at asparagine 21. Positions 68–98 (TPEARTSEDSLLKSTLPPSETSAPAEGVRNQ) are disordered. The segment covering 79-89 (LKSTLPPSETS) has biased composition (polar residues). Asparagine 97, asparagine 114, and asparagine 120 each carry an N-linked (GlcNAc...) asparagine glycan. N-linked (GlcNAc...) (complex) asparagine glycosylation is present at asparagine 136. The interval 157-200 (NTVGGTGGIGGVGGTGGVGNRAPRETYLSRGDSSSSQRTDYQKS) is disordered. A compositionally biased stretch (gly residues) spans 160-175 (GGTGGIGGVGGTGGVG). A Cell attachment site motif is present at residues 186 to 188 (RGD). Positions 187–200 (GDSSSSQRTDYQKS) are enriched in polar residues. The region spanning 207–282 (GKNWCAYVHT…PGYSGPKCQL (76 aa)) is the EMI domain. 3 disulfide bridges follow: cysteine 211-cysteine 272, cysteine 238-cysteine 245, and cysteine 271-cysteine 280. The O-linked (Fuc) threonine glycan is linked to threonine 216. A glycan (O-linked (Fuc) threonine) is linked at threonine 265. 2 coiled-coil regions span residues 333–365 (MKLTLLQKKIDNISLTVNDVRNTYSSLEGKVSE) and 400–430 (NDMQETVAQLFKTVSSLSEDLESTRQIIQKV). A glycan (N-linked (GlcNAc...) asparagine) is linked at asparagine 344. Residues asparagine 431, asparagine 507, asparagine 541, asparagine 576, asparagine 618, asparagine 680, asparagine 729, asparagine 783, asparagine 816, asparagine 828, asparagine 840, asparagine 921, asparagine 933, asparagine 942, asparagine 981, and asparagine 1020 are each glycosylated (N-linked (GlcNAc...) asparagine). Positions 503–523 (YESLNKTLSKLKEVHEQLLST) form a coiled coil. 2 coiled-coil regions span residues 580–650 (SLEM…EILQ) and 675–726 (RKKI…EMED). A coiled-coil region spans residues 819–869 (NFQKMYQMFNETTSQVRKYQQNMSHLEEKLLLTTKISKNFETRLQDIESKV). The 37-residue stretch at 1041–1077 (EYSSCSRHPCQNGGTCINGRTSFTCACRHPFTGDNCT) folds into the EGF-like domain. 3 disulfide bridges follow: cysteine 1045-cysteine 1056, cysteine 1050-cysteine 1065, and cysteine 1067-cysteine 1076. A glycan (O-linked (Fuc) threonine) is linked at threonine 1055. Asparagine 1075 carries N-linked (GlcNAc...) asparagine glycosylation. One can recognise a C1q domain in the interval 1096-1228 (RYAPMVAFFA…TFSGYLLYRT (133 aa)).

In terms of assembly, multimeric. Composed of varying sized, disulfide-linked multimers, the smallest of which is a homotrimer. Proteolysis of the promultimerin in the N-terminal region, leads to the mature p155 form that is stored in platelets. Interacts with factor V/Va. Post-translationally, the N-terminus is blocked. In terms of processing, extensively N-glycosylated. O-fucosylated within the EMI domain (at Thr-216 and Thr-265) by FUT10/POFUT3 and FUT11/POFUT4. O-fucosylation at Thr-216 and Thr-1055 are required for facilitating protein folding and secretion. Synthesized by endothelial cells and megakaryocytes. Stored in platelet alpha granules and endothelial cell Weibel-Palade bodies, following activation of these cells, it is released and attached to megakaryocytes, platelets, endothelium and subendothelium of blood vessels. Not found in plasma. Found in vascular tissues such as placenta, lung, and liver.

The protein localises to the secreted. In terms of biological role, carrier protein for platelet (but not plasma) factor V/Va. Plays a role in the storage and stabilization of factor V in platelets. Upon release following platelet activation, may limit platelet and plasma factor Va-dependent thrombin generation. Ligand for integrin alpha-IIb/beta-3 and integrin alpha-V/beta-3 on activated platelets, and may function as an extracellular matrix or adhesive protein. The sequence is that of Multimerin-1 (MMRN1) from Homo sapiens (Human).